The following is a 469-amino-acid chain: Phenylalanine--tRNA ligase alpha subunit (469 aa).

L-phenylalanine-binding positions include Thr309, 348–350 (QLD), and Phe388. Residue Glu390 coordinates Mg(2+).

This sequence belongs to the class-II aminoacyl-tRNA synthetase family. Phe-tRNA synthetase alpha subunit type 2 subfamily. Tetramer of two alpha and two beta subunits. Mg(2+) serves as cofactor.

It localises to the cytoplasm. It catalyses the reaction tRNA(Phe) + L-phenylalanine + ATP = L-phenylalanyl-tRNA(Phe) + AMP + diphosphate + H(+). The sequence is that of Phenylalanine--tRNA ligase alpha subunit from Sulfurisphaera tokodaii (strain DSM 16993 / JCM 10545 / NBRC 100140 / 7) (Sulfolobus tokodaii).